A 610-amino-acid chain; its full sequence is Calcium-dependent protein kinase 1 (610 aa).

Glycine 2 is lipidated: N-myristoyl glycine. Cysteine 5 carries the S-palmitoyl cysteine lipid modification. Residues 17–133 (VSAAMWRPRD…HMKRVSSAGL (117 aa)) form a disordered region. Composition is skewed to basic and acidic residues over residues 47 to 56 (LRSRLSDEVQ) and 70 to 117 (TDVE…DPPA). The segment covering 118–127 (KPKKPKHMKR) has biased composition (basic residues). Residues 150–408 (YSLGRKLGQG…AHQVLCHPWV (259 aa)) enclose the Protein kinase domain. Residues 156-164 (LGQGQFGTT) and lysine 179 contribute to the ATP site. Aspartate 274 functions as the Proton acceptor in the catalytic mechanism. The residue at position 314 (serine 314) is a Phosphoserine. Positions 414–444 (APDKPLDSAVLSRMKQFSAMNKFKKMALRVI) are autoinhibitory domain. 4 EF-hand domains span residues 451-486 (EEIA…VGAN), 487-522 (LKES…LNKI), 523-558 (ERED…FGVE), and 559-592 (DVRI…GSIT). Residues aspartate 464, aspartate 466, serine 468, glutamine 470, glutamate 475, aspartate 500, aspartate 502, serine 504, threonine 506, glutamate 511, aspartate 536, aspartate 538, serine 540, tyrosine 542, glutamate 547, aspartate 570, aspartate 572, aspartate 574, arginine 576, and glutamate 581 each contribute to the Ca(2+) site.

This sequence belongs to the protein kinase superfamily. Ser/Thr protein kinase family. CDPK subfamily. As to quaternary structure, interacts with 14-3-3 proteins.

The protein resides in the peroxisome membrane. The enzyme catalyses L-seryl-[protein] + ATP = O-phospho-L-seryl-[protein] + ADP + H(+). It catalyses the reaction L-threonyl-[protein] + ATP = O-phospho-L-threonyl-[protein] + ADP + H(+). With respect to regulation, activated by calcium. Autophosphorylation may play an important role in the regulation of the kinase activity. Its function is as follows. May play a role in signal transduction pathways that involve calcium as a second messenger. Phosphorylates the Ca(2+)-ATPase ACA2 resulting in the inhibition of its calcium activation. The chain is Calcium-dependent protein kinase 1 (CPK1) from Arabidopsis thaliana (Mouse-ear cress).